Here is a 172-residue protein sequence, read N- to C-terminus: R-phycocyanin-2 beta chain (172 aa).

Asn72 bears the N4-methylasparagine mark. Residue Cys82 coordinates (2R,3E)-phycocyanobilin. Cys153 is a (2R,3E)-phycoerythrobilin binding site.

This sequence belongs to the phycobiliprotein family. Heterodimer of an alpha and a beta chain. Contains two covalently linked bilin chromophores.

It is found in the cellular thylakoid membrane. Light-harvesting photosynthetic bile pigment-protein from the phycobiliprotein complex. This is R-phycocyanin-2 beta chain (rpcB) from Synechococcus sp. (strain WH8103).